Here is a 153-residue protein sequence, read N- to C-terminus: D-erythrulose-4-phosphate isomerase 1 (153 aa).

C69 functions as the Proton acceptor in the catalytic mechanism.

This sequence belongs to the LacAB/RpiB family.

The enzyme catalyses D-erythrulose 4-phosphate = D-erythrose 4-phosphate. It functions in the pathway carbohydrate metabolism; erythritol degradation. Its pathway is carbohydrate metabolism; D-threitol degradation. Its function is as follows. Catalyzes the isomerization of D-erythrulose-4P to D-erythrose-4P. Involved in the degradation pathways of erythritol and D-threitol, that allow M.smegmatis to grow on these compounds as the sole carbon source. The polypeptide is D-erythrulose-4-phosphate isomerase 1 (Mycolicibacterium smegmatis (strain ATCC 700084 / mc(2)155) (Mycobacterium smegmatis)).